The chain runs to 399 residues: DJ-1 protein homolog F (399 aa).

2 consecutive PfpI endopeptidase domains span residues Lys-7–Gly-199 and Thr-211–Gly-394.

This sequence belongs to the peptidase C56 family. Homotrimer.

Functionally, may be involved in oxidative stress response. In Arabidopsis thaliana (Mouse-ear cress), this protein is DJ-1 protein homolog F (DJ1F).